The following is a 298-amino-acid chain: GTPase Era (298 aa).

One can recognise an Era-type G domain in the interval 3-170; that stretch reads KSGFVAILGR…VQLLKDNLEE (168 aa). Residues 11–18 are G1; sequence GRPNVGKS. GTP is bound at residue 11 to 18; that stretch reads GRPNVGKS. The interval 37–41 is G2; that stretch reads QTTRN. The G3 stretch occupies residues 58–61; it reads DTPG. Residues 58–62 and 120–123 each bind GTP; these read DTPGI and NKID. The segment at 120–123 is G4; that stretch reads NKID. A G5 region spans residues 149–151; the sequence is ISA. One can recognise a KH type-2 domain in the interval 201-279; it reads TQQEVPHSVA…YLETWVKVKK (79 aa).

This sequence belongs to the TRAFAC class TrmE-Era-EngA-EngB-Septin-like GTPase superfamily. Era GTPase family. Monomer.

The protein resides in the cytoplasm. It is found in the cell membrane. Functionally, an essential GTPase that binds both GDP and GTP, with rapid nucleotide exchange. Plays a role in 16S rRNA processing and 30S ribosomal subunit biogenesis and possibly also in cell cycle regulation and energy metabolism. In Streptococcus equi subsp. equi (strain 4047), this protein is GTPase Era.